A 390-amino-acid polypeptide reads, in one-letter code: MLNNTSSDFDLIIRQQPNRARVAGGKEKEERPVPVAPSTALAGTLVSSLHRLKDVDNSDGGFFVFGDLSVKIEGEFRLKFTLFEMRKDRVSYLKTVISERFTVSPPKSFPGMMESTHLSRSFADQGVKLRIRKEPRTMLKRSTRPDEFHQPVPTRSPERQSVQIPPSSSYGGYPPAARDYGYYGQQPPVKRHRTSIDYGRQQGLYDVDGRMARQMDPYGQPTAAMYAGQPAAYQTPAAMQTYNTGQVVPDYTAMYPGMQASAGMQASAPMSQIPDPTGQSRSSQQQQAAVGQLMAMNQPGTPTPDSTGAMMAQGYARSGYPPSSTILPPLQRSRDYPQGTNGSARAYFDQTPQANTPILPSQMVNEGDRFSSVTGPTTFNHPDSPNGTPQ.

A Velvet domain is found at 3 to 132 (NNTSSDFDLI…ADQGVKLRIR (130 aa)). Residues 137-149 (TMLKRSTRPDEFH) are compositionally biased toward basic and acidic residues. 2 disordered regions span residues 137–191 (TMLK…PVKR) and 265–390 (QASA…GTPQ). Residues 165-175 (PPSSSYGGYPP) are compositionally biased toward low complexity. The Nuclear localization signal motif lies at 273–280 (IPDPTGQS). Composition is skewed to polar residues over residues 350 to 364 (QTPQ…SQMV) and 371 to 390 (SSVT…GTPQ).

It belongs to the velvet family. VosA subfamily. As to quaternary structure, forms a heterodimeric complex with velB; the formation of the velB-vosA complex is light-dependent. Interacts with velA, velB and velC.

Its subcellular location is the nucleus. Its function is as follows. Component of the velB-VosA heterodimeric complex that plays a dual role in activating genes associated with spore maturation and repressing certain development-associated genes. The complex binds DNA through the DNA-binding domain of vosA that recognizes an 11-nucleotide consensus sequence 5'-CTGGCCGCGGC-3' consisting of two motifs in the promoters of key developmental regulatory genes. The chain is Spore development regulator vosA from Penicillium rubens (strain ATCC 28089 / DSM 1075 / NRRL 1951 / Wisconsin 54-1255) (Penicillium chrysogenum).